Reading from the N-terminus, the 395-residue chain is Protein NDRG1 (395 aa).

The segment at Arg325–Cys395 is disordered. Positions Ser326–Gly339 are enriched in low complexity. Repeat copies occupy residues Gly339–Glu348, Gly349–Asp358, Gly359–Asp368, and Gly369–Ser378. The 4 X 10 AA tandem repeats of G-[NS]-R-S-R-[AS]-H-T-[DGN]-[DES] stretch occupies residues Gly339–Ser378. Positions His345–Thr376 are enriched in basic and acidic residues. The span at Asp377 to Lys389 shows a compositional bias: polar residues.

This sequence belongs to the NDRG family.

Its function is as follows. May be involved in pronephros development, after specification of the pronephros. The protein is Protein NDRG1 of Xenopus tropicalis (Western clawed frog).